The sequence spans 904 residues: Thiamine diphosphate dependent-3-acetyloctanal synthase PigD (904 aa).

The tract at residues 879 to 904 (RKAWAAQQPESTSTAFDQDPTQEATS) is disordered. A compositionally biased stretch (polar residues) spans 886-904 (QPESTSTAFDQDPTQEATS).

The protein belongs to the TPP enzyme family. Thiamine diphosphate serves as cofactor.

The enzyme catalyses (2E)-octenal + pyruvate + H(+) = (S)-3-acetyloctanal + CO2. Its pathway is antibiotic biosynthesis; prodigiosin biosynthesis. Its function is as follows. Involved in the biosynthesis of 2-methyl-3-n-amyl-pyrrole (MAP), one of the terminal products involved in the biosynthesis of the red antibiotic prodigiosin (Pig). Catalyzes the decarboxylation of pyruvate, followed by the modification of the resulting two-carbon fragment acetaldehyde at the C3 position of the 2-octenal (1,2-addition of acetaldehyde) giving 3-acetyloctanal. In vitro, it can act on a number of alpha,beta-unsaturated carbonyl compounds, including aldehydes and ketones, and can catalyze both 1,2-addition and Stetter-type 1,4-addition depending on the substrate. In Serratia marcescens, this protein is Thiamine diphosphate dependent-3-acetyloctanal synthase PigD.